Consider the following 89-residue polypeptide: Elongation factor 1-beta (89 aa).

Belongs to the EF-1-beta/EF-1-delta family.

In terms of biological role, promotes the exchange of GDP for GTP in EF-1-alpha/GDP, thus allowing the regeneration of EF-1-alpha/GTP that could then be used to form the ternary complex EF-1-alpha/GTP/AAtRNA. In Methanococcus maripaludis (strain C6 / ATCC BAA-1332), this protein is Elongation factor 1-beta.